The chain runs to 572 residues: Proline--tRNA ligase (572 aa).

It belongs to the class-II aminoacyl-tRNA synthetase family. ProS type 1 subfamily. As to quaternary structure, homodimer.

It localises to the cytoplasm. The catalysed reaction is tRNA(Pro) + L-proline + ATP = L-prolyl-tRNA(Pro) + AMP + diphosphate. Its function is as follows. Catalyzes the attachment of proline to tRNA(Pro) in a two-step reaction: proline is first activated by ATP to form Pro-AMP and then transferred to the acceptor end of tRNA(Pro). As ProRS can inadvertently accommodate and process non-cognate amino acids such as alanine and cysteine, to avoid such errors it has two additional distinct editing activities against alanine. One activity is designated as 'pretransfer' editing and involves the tRNA(Pro)-independent hydrolysis of activated Ala-AMP. The other activity is designated 'posttransfer' editing and involves deacylation of mischarged Ala-tRNA(Pro). The misacylated Cys-tRNA(Pro) is not edited by ProRS. The polypeptide is Proline--tRNA ligase (Escherichia coli O127:H6 (strain E2348/69 / EPEC)).